Consider the following 329-residue polypeptide: DNA-directed RNA polymerase subunit alpha (329 aa).

Residues 1 to 235 (MQGSVTEFLK…EQLDAFVDLR (235 aa)) are alpha N-terminal domain (alpha-NTD). An alpha C-terminal domain (alpha-CTD) region spans residues 249 to 329 (FDPILLRPVD…NWPPASIAED (81 aa)).

The protein belongs to the RNA polymerase alpha chain family. As to quaternary structure, homodimer. The RNAP catalytic core consists of 2 alpha, 1 beta, 1 beta' and 1 omega subunit. When a sigma factor is associated with the core the holoenzyme is formed, which can initiate transcription.

It catalyses the reaction RNA(n) + a ribonucleoside 5'-triphosphate = RNA(n+1) + diphosphate. Functionally, DNA-dependent RNA polymerase catalyzes the transcription of DNA into RNA using the four ribonucleoside triphosphates as substrates. This Actinobacillus pleuropneumoniae serotype 5b (strain L20) protein is DNA-directed RNA polymerase subunit alpha.